Consider the following 285-residue polypeptide: Foldase protein PrsA 2 (285 aa).

The signal sequence occupies residues 1–20 (MRGKHIFIITALISILMLAA). A lipid anchor (N-palmitoyl cysteine) is attached at Cys21. A lipid anchor (S-diacylglycerol cysteine) is attached at Cys21. In terms of domain architecture, PpiC spans 134-224 (KPEIKASHIL…NGYHIIKLTG (91 aa)).

The protein belongs to the PrsA family.

Its subcellular location is the cell membrane. The enzyme catalyses [protein]-peptidylproline (omega=180) = [protein]-peptidylproline (omega=0). Its function is as follows. Plays a major role in protein secretion by helping the post-translocational extracellular folding of several secreted proteins. Important for the secretion of the protective antigen. The three PsrA proteins in this organism show different but overlapping substrate specificities. This chain is Foldase protein PrsA 2 (prsA2), found in Bacillus anthracis.